A 143-amino-acid chain; its full sequence is MLEIRITDPRWTKKLKNLDALLQKALECCLEGKKAEFSVVLTDDEFIRTLNKSYRGRDTPTNVLSFNYTNEQIGIGIIGEVILSFDRLVIEALENEIKFEDHLLHMFIHGVLHVLGYDHSSDRETLAMEKKEEEILKKLALLG.

The Zn(2+) site is built by His-109, His-113, and His-119.

It belongs to the endoribonuclease YbeY family. Zn(2+) serves as cofactor.

The protein resides in the cytoplasm. Functionally, single strand-specific metallo-endoribonuclease involved in late-stage 70S ribosome quality control and in maturation of the 3' terminus of the 16S rRNA. This is Endoribonuclease YbeY from Neorickettsia sennetsu (strain ATCC VR-367 / Miyayama) (Ehrlichia sennetsu).